Reading from the N-terminus, the 213-residue chain is N-(5'-phosphoribosyl)anthranilate isomerase (213 aa).

It belongs to the TrpF family.

The catalysed reaction is N-(5-phospho-beta-D-ribosyl)anthranilate = 1-(2-carboxyphenylamino)-1-deoxy-D-ribulose 5-phosphate. The protein operates within amino-acid biosynthesis; L-tryptophan biosynthesis; L-tryptophan from chorismate: step 3/5. In Rhodopseudomonas palustris (strain ATCC BAA-98 / CGA009), this protein is N-(5'-phosphoribosyl)anthranilate isomerase.